Here is a 116-residue protein sequence, read N- to C-terminus: Large ribosomal subunit protein bL17 (116 aa).

It belongs to the bacterial ribosomal protein bL17 family. Part of the 50S ribosomal subunit. Contacts protein L32.

The sequence is that of Large ribosomal subunit protein bL17 from Prochlorococcus marinus (strain SARG / CCMP1375 / SS120).